The primary structure comprises 190 residues: Xanthine phosphoribosyltransferase 1 (190 aa).

Leucine 20 and asparagine 27 together coordinate xanthine. 128–132 is a 5-phospho-alpha-D-ribose 1-diphosphate binding site; sequence ANGEA. Lysine 156 provides a ligand contact to xanthine.

This sequence belongs to the purine/pyrimidine phosphoribosyltransferase family. Xpt subfamily. As to quaternary structure, homodimer.

It localises to the cytoplasm. The enzyme catalyses XMP + diphosphate = xanthine + 5-phospho-alpha-D-ribose 1-diphosphate. It functions in the pathway purine metabolism; XMP biosynthesis via salvage pathway; XMP from xanthine: step 1/1. Converts the preformed base xanthine, a product of nucleic acid breakdown, to xanthosine 5'-monophosphate (XMP), so it can be reused for RNA or DNA synthesis. In Clostridium botulinum (strain ATCC 19397 / Type A), this protein is Xanthine phosphoribosyltransferase 1.